A 355-amino-acid polypeptide reads, in one-letter code: Chromatin modification-related protein EAF3 (355 aa).

Positions 3 to 77 constitute a Tudor-knot domain; that stretch reads EVGGKCLAYH…WDEWVSVDRI (75 aa). Residues 98 to 150 are disordered; it reads ASLAQQQKTKNGGSAKRGGGGAHSESNHGGRRSGSGDRRDSNAEERGIVPSEG. Residues 131–144 show a composition bias toward basic and acidic residues; it reads GSGDRRDSNAEERG. An MRG domain is found at 163 to 353; sequence SRNKLRIHIP…TSSQYEGVAL (191 aa).

It belongs to the MRG family. As to quaternary structure, component of the NuA4 histone acetyltransferase complex.

It is found in the nucleus. Involved in deacetylation of histones, chromatin assembly and chromosome segregation. May act as a transcriptional oscillator, directing histone deacetylases to specific chromosomal domains. Component of the NuA4 histone acetyltransferase complex which is involved in transcriptional activation of selected genes principally by acetylation of nucleosomal histone H4 and H2A. The NuA4 complex is also involved in DNA repair. The protein is Chromatin modification-related protein EAF3 (EAF3) of Candida glabrata (strain ATCC 2001 / BCRC 20586 / JCM 3761 / NBRC 0622 / NRRL Y-65 / CBS 138) (Yeast).